Consider the following 434-residue polypeptide: 5-methylthioadenosine/S-adenosylhomocysteine deaminase (434 aa).

Residues H66 and H68 each contribute to the Zn(2+) site. Substrate contacts are provided by E95, R148, and H188. Position 215 (H215) interacts with Zn(2+). Positions 218 and 304 each coordinate substrate. D304 contacts Zn(2+).

This sequence belongs to the metallo-dependent hydrolases superfamily. MTA/SAH deaminase family. Zn(2+) serves as cofactor.

The enzyme catalyses S-adenosyl-L-homocysteine + H2O + H(+) = S-inosyl-L-homocysteine + NH4(+). It catalyses the reaction S-methyl-5'-thioadenosine + H2O + H(+) = S-methyl-5'-thioinosine + NH4(+). Its function is as follows. Catalyzes the deamination of 5-methylthioadenosine and S-adenosyl-L-homocysteine into 5-methylthioinosine and S-inosyl-L-homocysteine, respectively. Is also able to deaminate adenosine. This is 5-methylthioadenosine/S-adenosylhomocysteine deaminase from Shouchella clausii (strain KSM-K16) (Alkalihalobacillus clausii).